An 872-amino-acid polypeptide reads, in one-letter code: Trichohyalin-like protein 1 (872 aa).

Residues 46–81 form the EF-hand domain; the sequence is CAIHAVERNLNLLNIDSNGAISFDEFVLAIFSFLNV. Polar residues predominate over residues 117–127; it reads QWTEGTSQTQD. Disordered stretches follow at residues 117 to 759, 774 to 813, and 830 to 872; these read QWTE…ERGA, LQQT…DSSD, and EFLP…APKQ. Composition is skewed to basic and acidic residues over residues 142-155, 164-190, 218-235, 296-307, 324-348, 365-375, 399-435, and 486-505; these read SLEE…RVDP, LPVE…KVDQ, TKGE…DILA, GKDEPSSEHVDL, AAKD…ETRD, RVERKGVRGPE, EDKK…KDSE, and SGEK…KEDD. A compositionally biased stretch (polar residues) spans 538 to 570; that stretch reads NSETSDLFVQGDSQSQTNPFRGSVQGSDSNNPE. Basic and acidic residues-rich tracts occupy residues 571–584, 592–608, and 664–684; these read TQKH…KRVQ, RGED…EHEG, and TKKD…KEED. Polar residues-rich tracts occupy residues 699-708 and 718-729; these read ENNAVSQKTC and SPQQLAGEQSLS. Positions 730 to 751 are enriched in basic and acidic residues; it reads TKEHDPSVSESGLEERMQRDQE. Polar residues-rich tracts occupy residues 774 to 793 and 801 to 812; these read LQQT…TASV and NQSSASLTNDSS. Residues 849–865 show a composition bias toward basic and acidic residues; sequence LEDKQGRPQREELEPQK.

This sequence belongs to the S-100 family.

This Bos taurus (Bovine) protein is Trichohyalin-like protein 1 (TCHHL1).